The primary structure comprises 112 residues: uncharacterized protein (112 aa).

Disordered regions lie at residues 1–53 (MSKL…QRLK) and 80–112 (MINQ…MLEL). Positions 8–22 (SALQKLIESQKNPNA) are enriched in polar residues. A compositionally biased stretch (basic residues) spans 86–96 (ETKKRKRKQKK). Over residues 101–112 (DYGVFEEDMLEL) the composition is skewed to acidic residues.

It is found in the nucleus. It localises to the nucleolus. This is an uncharacterized protein from Schizosaccharomyces pombe (strain 972 / ATCC 24843) (Fission yeast).